The primary structure comprises 304 residues: Ribosomal RNA small subunit methyltransferase H (304 aa).

S-adenosyl-L-methionine-binding positions include 37-39 (AGH), D57, F79, D100, and H107.

It belongs to the methyltransferase superfamily. RsmH family.

Its subcellular location is the cytoplasm. It carries out the reaction cytidine(1402) in 16S rRNA + S-adenosyl-L-methionine = N(4)-methylcytidine(1402) in 16S rRNA + S-adenosyl-L-homocysteine + H(+). In terms of biological role, specifically methylates the N4 position of cytidine in position 1402 (C1402) of 16S rRNA. The chain is Ribosomal RNA small subunit methyltransferase H from Bacteroides thetaiotaomicron (strain ATCC 29148 / DSM 2079 / JCM 5827 / CCUG 10774 / NCTC 10582 / VPI-5482 / E50).